Consider the following 263-residue polypeptide: Phosphatidylglycerol--prolipoprotein diacylglyceryl transferase (263 aa).

4 helical membrane passes run 6 to 26, 50 to 70, 85 to 105, and 112 to 132; these read VIFS…VLGI, LLTA…VLIY, TWEG…AVII, and IPIF…LFLG. A 1,2-diacyl-sn-glycero-3-phospho-(1'-sn-glycerol) is bound at residue arginine 133. 3 helical membrane passes run 169–189, 197–217, and 233–253; these read LYEA…LFFL, GALT…VEFF, and MGQL…LGAL.

The protein belongs to the Lgt family.

It localises to the cell membrane. The catalysed reaction is L-cysteinyl-[prolipoprotein] + a 1,2-diacyl-sn-glycero-3-phospho-(1'-sn-glycerol) = an S-1,2-diacyl-sn-glyceryl-L-cysteinyl-[prolipoprotein] + sn-glycerol 1-phosphate + H(+). It functions in the pathway protein modification; lipoprotein biosynthesis (diacylglyceryl transfer). Functionally, catalyzes the transfer of the diacylglyceryl group from phosphatidylglycerol to the sulfhydryl group of the N-terminal cysteine of a prolipoprotein, the first step in the formation of mature lipoproteins. The protein is Phosphatidylglycerol--prolipoprotein diacylglyceryl transferase of Wolbachia sp. subsp. Drosophila simulans (strain wRi).